The chain runs to 450 residues: Phosphoglucosamine mutase (450 aa).

The active-site Phosphoserine intermediate is the Ser101. Ser101, Asp241, Asp243, and Asp245 together coordinate Mg(2+). Ser101 bears the Phosphoserine mark.

Belongs to the phosphohexose mutase family. Mg(2+) serves as cofactor. Activated by phosphorylation.

It catalyses the reaction alpha-D-glucosamine 1-phosphate = D-glucosamine 6-phosphate. In terms of biological role, catalyzes the conversion of glucosamine-6-phosphate to glucosamine-1-phosphate. This chain is Phosphoglucosamine mutase, found in Listeria monocytogenes serovar 1/2a (strain ATCC BAA-679 / EGD-e).